We begin with the raw amino-acid sequence, 330 residues long: Poly(3-hydroxyalkanoate) polymerase subunit PhaE (330 aa).

The stretch at 298-328 (RSEVDEIHQTIYQLRKEVKSLKKRLGETEAN) forms a coiled coil.

Belongs to the PHA/PHB synthase family. Type III PhaE subfamily. Forms a heterodimer with PhaC, which may multimerize in the presence of 3-hydroxybutyryl-CoA. Both subunits are required for PHB synthesis in E.coli and in PHA-negative A.eutrophus.

It localises to the cytoplasm. Its pathway is biopolymer metabolism; poly-(R)-3-hydroxybutanoate biosynthesis. When expressed in E.coli with Synechocystis PhaC and C.necator PhaA and PhaB, confers the ability to synthesize up to 13% (w/w) poly(3-hydroxybutyrate) (PHB) depending on the carbon source; all 4 genes are necessary for PHB production. Cell-free in vitro coexpression with PhaE gives a heterodimer able to polymerize 3-hydroxybutyrate-CoA. This subunit has no catalytic activity but enhances the activity of PhaC, the catalytic subunit. The polypeptide is Poly(3-hydroxyalkanoate) polymerase subunit PhaE (Synechocystis sp. (strain ATCC 27184 / PCC 6803 / Kazusa)).